The following is a 414-amino-acid chain: Serpin A12 (414 aa).

Residues 1-20 form the signal peptide; the sequence is MNPTLGLAIFLAVLLTVKGL. N-linked (GlcNAc...) (complex) asparagine glycosylation is found at Asn-221 and Asn-233. N-linked (GlcNAc...) (high mannose) asparagine glycosylation occurs at Asn-267. Positions 364-382 are reactive center loop; the sequence is GTEGAAGTGAQTLPMETPL.

This sequence belongs to the serpin family. Forms a stable complex with KLK7. In terms of processing, glycosylation slightly decreases affinity for heparin, but otherwise has no significant effect on KLK7 inhibitory activity or thermal stability of the protein. As to expression, expressed in visceral adipose tissues.

Its subcellular location is the secreted. Its activity is regulated as follows. Inhibition of KLK7 is enhanced by heparin. Functionally, adipokine that modulates insulin action by specifically inhibiting its target protease KLK7 in white adipose tissues. The protein is Serpin A12 (SERPINA12) of Homo sapiens (Human).